Here is a 114-residue protein sequence, read N- to C-terminus: Ribonuclease U2 (114 aa).

3 disulfides stabilise this stretch: Cys1–Cys54, Cys9–Cys113, and Cys55–Cys96. 6 residues coordinate Ca(2+): Asp29, Val30, Ala31, Asn32, Asp37, and Tyr39. 39-49 (YPHQYYDEASE) is a substrate binding site. His41 is a catalytic residue. Glu62 acts as the Proton acceptor in catalysis. A substrate-binding site is contributed by Arg85. The Proton donor role is filled by His101. Residue 108-110 (DGF) coordinates substrate.

The protein belongs to the ribonuclease U2 family.

It catalyses the reaction [RNA] containing adenosine + H2O = an [RNA fragment]-3'-adenosine-3'-phosphate + a 5'-hydroxy-ribonucleotide-3'-[RNA fragment].. The enzyme catalyses [RNA] containing guanosine + H2O = an [RNA fragment]-3'-guanosine-3'-phosphate + a 5'-hydroxy-ribonucleotide-3'-[RNA fragment].. In Ustilago sphaerogena (Smut fungus), this protein is Ribonuclease U2 (RNU2).